The following is a 382-amino-acid chain: Dual-specificity RNA methyltransferase RlmN (382 aa).

Catalysis depends on E96, which acts as the Proton acceptor. Residues 102–342 (QGGRGTLCVS…VRTTRGEDID (241 aa)) form the Radical SAM core domain. An intrachain disulfide couples C109 to C345. [4Fe-4S] cluster is bound by residues C116, C120, and C123. S-adenosyl-L-methionine contacts are provided by residues 170–171 (GE), S202, 224–226 (SLH), and N302. C345 serves as the catalytic S-methylcysteine intermediate.

Belongs to the radical SAM superfamily. RlmN family. [4Fe-4S] cluster serves as cofactor.

It is found in the cytoplasm. The enzyme catalyses adenosine(2503) in 23S rRNA + 2 reduced [2Fe-2S]-[ferredoxin] + 2 S-adenosyl-L-methionine = 2-methyladenosine(2503) in 23S rRNA + 5'-deoxyadenosine + L-methionine + 2 oxidized [2Fe-2S]-[ferredoxin] + S-adenosyl-L-homocysteine. The catalysed reaction is adenosine(37) in tRNA + 2 reduced [2Fe-2S]-[ferredoxin] + 2 S-adenosyl-L-methionine = 2-methyladenosine(37) in tRNA + 5'-deoxyadenosine + L-methionine + 2 oxidized [2Fe-2S]-[ferredoxin] + S-adenosyl-L-homocysteine. Its function is as follows. Specifically methylates position 2 of adenine 2503 in 23S rRNA and position 2 of adenine 37 in tRNAs. m2A2503 modification seems to play a crucial role in the proofreading step occurring at the peptidyl transferase center and thus would serve to optimize ribosomal fidelity. This Stutzerimonas stutzeri (strain A1501) (Pseudomonas stutzeri) protein is Dual-specificity RNA methyltransferase RlmN.